Reading from the N-terminus, the 1070-residue chain is DNA-directed RNA polymerase subunit beta (1070 aa).

The protein belongs to the RNA polymerase beta chain family. In terms of assembly, in plastids the minimal PEP RNA polymerase catalytic core is composed of four subunits: alpha, beta, beta', and beta''. When a (nuclear-encoded) sigma factor is associated with the core the holoenzyme is formed, which can initiate transcription.

It is found in the plastid. It localises to the chloroplast. The enzyme catalyses RNA(n) + a ribonucleoside 5'-triphosphate = RNA(n+1) + diphosphate. DNA-dependent RNA polymerase catalyzes the transcription of DNA into RNA using the four ribonucleoside triphosphates as substrates. The chain is DNA-directed RNA polymerase subunit beta from Chloranthus spicatus (Chulantree).